Consider the following 53-residue polypeptide: Sec-independent protein translocase protein TatA (53 aa).

The chain crosses the membrane as a helical span at residues 1–21; the sequence is MGMSFSHLLIVLLIIFVLFGA.

This sequence belongs to the TatA/E family. The Tat system comprises two distinct complexes: a TatABC complex, containing multiple copies of TatA, TatB and TatC subunits, and a separate TatA complex, containing only TatA subunits. Substrates initially bind to the TatABC complex, which probably triggers association of the separate TatA complex to form the active translocon.

It is found in the cell inner membrane. Functionally, part of the twin-arginine translocation (Tat) system that transports large folded proteins containing a characteristic twin-arginine motif in their signal peptide across membranes. TatA could form the protein-conducting channel of the Tat system. This is Sec-independent protein translocase protein TatA from Rickettsia africae (strain ESF-5).